Here is a 706-residue protein sequence, read N- to C-terminus: D-(-)-3-hydroxybutyrate oligomer hydrolase (706 aa).

The first 32 residues, 1–32, serve as a signal peptide directing secretion; it reads MTTTSKNCLTLTSIAAAVAAVLVLSACGGGSA. Residue serine 311 is the Charge relay system of the active site.

The protein belongs to the D-(-)-3-hydroxybutyrate oligomer hydrolase family.

The protein resides in the secreted. It catalyses the reaction (3R)-hydroxybutanoate dimer + H2O = 2 (R)-3-hydroxybutanoate + H(+). Its pathway is lipid metabolism; butanoate metabolism. Functionally, participates in the degradation of poly-3-hydroxybutyrate (PHB). It works downstream of poly(3-hydroxybutyrate) depolymerase, hydrolyzing D(-)-3-hydroxybutyrate oligomers of various length (3HB-oligomers) into 3HB-monomers. The chain is D-(-)-3-hydroxybutyrate oligomer hydrolase from Polaromonas sp. (strain JS666 / ATCC BAA-500).